Here is a 552-residue protein sequence, read N- to C-terminus: Hydroxylamine reductase (552 aa).

Cysteine 3, cysteine 6, cysteine 18, and cysteine 25 together coordinate [2Fe-2S] cluster. 8 residues coordinate hybrid [4Fe-2O-2S] cluster: histidine 250, glutamate 274, cysteine 318, cysteine 406, cysteine 434, cysteine 459, glutamate 493, and lysine 495. Cysteine persulfide is present on cysteine 406.

It belongs to the HCP family. [2Fe-2S] cluster is required as a cofactor. Hybrid [4Fe-2O-2S] cluster serves as cofactor.

It localises to the cytoplasm. The catalysed reaction is A + NH4(+) + H2O = hydroxylamine + AH2 + H(+). In terms of biological role, catalyzes the reduction of hydroxylamine to form NH(3) and H(2)O. This is Hydroxylamine reductase from Shewanella woodyi (strain ATCC 51908 / MS32).